A 110-amino-acid chain; its full sequence is Phosphoribosyl-ATP pyrophosphatase (110 aa).

This sequence belongs to the PRA-PH family.

The protein resides in the cytoplasm. It catalyses the reaction 1-(5-phospho-beta-D-ribosyl)-ATP + H2O = 1-(5-phospho-beta-D-ribosyl)-5'-AMP + diphosphate + H(+). Its pathway is amino-acid biosynthesis; L-histidine biosynthesis; L-histidine from 5-phospho-alpha-D-ribose 1-diphosphate: step 2/9. This chain is Phosphoribosyl-ATP pyrophosphatase, found in Clostridium botulinum (strain Kyoto / Type A2).